Consider the following 90-residue polypeptide: Large ribosomal subunit protein eL31 (90 aa).

The protein belongs to the eukaryotic ribosomal protein eL31 family.

In Thermococcus gammatolerans (strain DSM 15229 / JCM 11827 / EJ3), this protein is Large ribosomal subunit protein eL31.